Reading from the N-terminus, the 503-residue chain is Glutamate--tRNA ligase (503 aa).

The short motif at 15 to 25 (PSPTGYLHVGG) is the 'HIGH' region element. The 'KMSKS' region motif lies at 262–266 (KLSKR). Lysine 265 is an ATP binding site.

This sequence belongs to the class-I aminoacyl-tRNA synthetase family. Glutamate--tRNA ligase type 1 subfamily. Monomer.

Its subcellular location is the cytoplasm. It catalyses the reaction tRNA(Glu) + L-glutamate + ATP = L-glutamyl-tRNA(Glu) + AMP + diphosphate. Its function is as follows. Catalyzes the attachment of glutamate to tRNA(Glu) in a two-step reaction: glutamate is first activated by ATP to form Glu-AMP and then transferred to the acceptor end of tRNA(Glu). In Prosthecochloris aestuarii (strain DSM 271 / SK 413), this protein is Glutamate--tRNA ligase.